The chain runs to 314 residues: tRNA dimethylallyltransferase (314 aa).

10–17 (GPTAVGKT) contributes to the ATP binding site. 12–17 (TAVGKT) serves as a coordination point for substrate. The interval 35–38 (DSMQ) is interaction with substrate tRNA.

This sequence belongs to the IPP transferase family. Monomer. The cofactor is Mg(2+).

The enzyme catalyses adenosine(37) in tRNA + dimethylallyl diphosphate = N(6)-dimethylallyladenosine(37) in tRNA + diphosphate. Its function is as follows. Catalyzes the transfer of a dimethylallyl group onto the adenine at position 37 in tRNAs that read codons beginning with uridine, leading to the formation of N6-(dimethylallyl)adenosine (i(6)A). In Clostridium novyi (strain NT), this protein is tRNA dimethylallyltransferase.